The sequence spans 467 residues: Ribulose bisphosphate carboxylase large chain (467 aa).

Positions 1–2 are excised as a propeptide; that stretch reads MS. An N-acetylproline modification is found at proline 3. Residue lysine 14 is modified to N6,N6,N6-trimethyllysine. Positions 123 and 173 each coordinate substrate. Lysine 175 acts as the Proton acceptor in catalysis. Residue lysine 177 participates in substrate binding. Mg(2+) contacts are provided by lysine 201, aspartate 203, and glutamate 204. Residue lysine 201 is modified to N6-carboxylysine. Histidine 294 acts as the Proton acceptor in catalysis. Residues arginine 295, histidine 327, and serine 379 each coordinate substrate.

Belongs to the RuBisCO large chain family. Type I subfamily. As to quaternary structure, heterohexadecamer of 8 large chains and 8 small chains; disulfide-linked. The disulfide link is formed within the large subunit homodimers. Mg(2+) is required as a cofactor. In terms of processing, the disulfide bond which can form in the large chain dimeric partners within the hexadecamer appears to be associated with oxidative stress and protein turnover.

It is found in the plastid. The protein localises to the chloroplast. The catalysed reaction is 2 (2R)-3-phosphoglycerate + 2 H(+) = D-ribulose 1,5-bisphosphate + CO2 + H2O. It carries out the reaction D-ribulose 1,5-bisphosphate + O2 = 2-phosphoglycolate + (2R)-3-phosphoglycerate + 2 H(+). RuBisCO catalyzes two reactions: the carboxylation of D-ribulose 1,5-bisphosphate, the primary event in carbon dioxide fixation, as well as the oxidative fragmentation of the pentose substrate in the photorespiration process. Both reactions occur simultaneously and in competition at the same active site. The sequence is that of Ribulose bisphosphate carboxylase large chain from Serenoa repens (Saw palmetto).